The following is a 389-amino-acid chain: uncharacterized protein (389 aa).

WD repeat units lie at residues 11-53 (SFGS…QKIK), 146-186 (SHHD…EEDA), and 289-330 (AHGD…LDIP). Ser351 is subject to Phosphoserine. The segment at 361–389 (QKESVSTRPRKEKHKKAKKHSMKSRFKPY) is disordered. Residues 368–389 (RPRKEKHKKAKKHSMKSRFKPY) are compositionally biased toward basic residues.

This is an uncharacterized protein from Saccharomyces cerevisiae (strain ATCC 204508 / S288c) (Baker's yeast).